Here is a 422-residue protein sequence, read N- to C-terminus: G-protein coupled receptor 83 (422 aa).

The signal sequence occupies residues 1–17 (MNVPPVLLLFLLSSVRA). Topologically, residues 18-70 (TEQPQVVTEHPSMDAALTGANASHFWANYTFSDWQNFVGRRRYGAESQNPTVK) are extracellular. A helical membrane pass occupies residues 71-91 (ALLIVAYSFIIVFSLFGNVLV). At 92 to 106 (CHVIFKNQRMHSATS) the chain is on the cytoplasmic side. Residues 107-127 (LFIVNLAVADIMITLLNTPFT) traverse the membrane as a helical segment. Topologically, residues 128 to 143 (LVRFVNSTWVFGKGMC) are extracellular. Cysteine 143 and cysteine 223 are disulfide-bonded. A helical membrane pass occupies residues 144–166 (HVSRFAQYCSLHVSALTLTAIAV). Over 167–184 (DRHQVIMHPLKPRISITK) the chain is Cytoplasmic. Residues 185 to 205 (GVIYIAVIWVMATFFSLPHAI) form a helical membrane-spanning segment. Topologically, residues 206 to 236 (CQKLFTFKYSEDIVRSLCLPDFPEPADLFWK) are extracellular. A helical membrane pass occupies residues 237-257 (YLDLATFILLYLLPLFIISVA). At 258–292 (YARVAKKLWLCNTIGDVTTEQYLALRRKKKTTVKM) the chain is on the cytoplasmic side. The chain crosses the membrane as a helical span at residues 293 to 313 (LVLVVVLFALCWFPLNCYVLL). The Extracellular portion of the chain corresponds to 314–326 (LSSKAIHTNNALY). A helical transmembrane segment spans residues 327 to 347 (FAFHWFAMSSTCYNPFIYCWL). Topologically, residues 348-422 (NENFRVELKA…SSVEPTVAVS (75 aa)) are cytoplasmic. Residues 401 to 422 (PSSQIQSGKTDLSSVEPTVAVS) form a disordered region.

Belongs to the G-protein coupled receptor 1 family. As to expression, expressed preferentially in brain, and its neuronal expression is relegated to limbic brain regions, particularly in forebrain.

Its subcellular location is the cell membrane. Functionally, G-protein coupled receptor for PEN, a neuropeptide produced from the precursor protein, proSAAS (encoded by PCSK1N). Acts through a G(i)- and G(q)-alpha-alpha-mediated pathway in response to PEN. Plays a role in food intake and body weight regulation. May contribute to the regulation of anxiety-related behaviors. This chain is G-protein coupled receptor 83, found in Rattus norvegicus (Rat).